A 410-amino-acid polypeptide reads, in one-letter code: Alanine racemase (410 aa).

The region spanning 28 to 76 is the RPE1 insert domain; that stretch reads VDFLHNVANKEEFAGNTSPRTAAYTLVREDASLGSTPKLPLGASYAKNL. The active-site Proton acceptor; specific for D-alanine is the lysine 83. Residue lysine 83 is modified to N6-(pyridoxal phosphate)lysine. Residue arginine 182 coordinates substrate. Tyrosine 305 acts as the Proton acceptor; specific for L-alanine in catalysis. Methionine 353 lines the substrate pocket.

The protein belongs to the alanine racemase family. It depends on pyridoxal 5'-phosphate as a cofactor.

The catalysed reaction is L-alanine = D-alanine. It functions in the pathway amino-acid biosynthesis; D-alanine biosynthesis; D-alanine from L-alanine: step 1/1. In terms of biological role, catalyzes the interconversion of L-alanine and D-alanine. May also act on other amino acids. The sequence is that of Alanine racemase (alr) from Rickettsia bellii (strain RML369-C).